The sequence spans 194 residues: Fe/S biogenesis protein NfuA (194 aa).

Residues Cys-152 and Cys-155 each coordinate [4Fe-4S] cluster.

The protein belongs to the NfuA family. Homodimer. The cofactor is [4Fe-4S] cluster.

Functionally, involved in iron-sulfur cluster biogenesis. Binds a 4Fe-4S cluster, can transfer this cluster to apoproteins, and thereby intervenes in the maturation of Fe/S proteins. Could also act as a scaffold/chaperone for damaged Fe/S proteins. The sequence is that of Fe/S biogenesis protein NfuA from Pseudomonas entomophila (strain L48).